The sequence spans 1079 residues: DNA annealing helicase and endonuclease ZRANB3 (1079 aa).

Residues 46–208 enclose the Helicase ATP-binding domain; it reads IFALKRNGRC…FMQIEALFPQ (163 aa). Positions 46 to 481 are DNA annealing helicase activity; sequence IFALKRNGRC…GRKEKIQAEE (436 aa). Position 59 to 66 (59 to 66) interacts with ATP; that stretch reads DEMGLGKT. The DEAH box signature appears at 157 to 160; sequence DESH. One can recognise a Helicase C-terminal domain in the interval 325 to 481; it reads AVKDYIKMML…GRKEKIQAEE (157 aa). The PIP-box signature appears at 519 to 526; it reads QHDIRSFF. Ser569 bears the Phosphoserine mark. The disordered stretch occupies residues 582–601; it reads ASEDHCSPSEETPSQSKQIR. Polar residues predominate over residues 590 to 600; that stretch reads SEETPSQSKQI. A RanBP2-type zinc finger spans residues 621–650; it reads PVEGWQCSLCTYINNSELPYCEMCETPQGS. Position 630 is a (Microbial infection) S-methylcysteine (Cys630). Residues 689–725 form a disordered region; that stretch reads LAQSEPGQLADSKEETPKIEKEDGLTSQPGNEQWKSS. A compositionally biased stretch (basic and acidic residues) spans 699–712; it reads DSKEETPKIEKEDG. The segment covering 713-725 has biased composition (polar residues); that stretch reads LTSQPGNEQWKSS. An HNH domain is found at 1011-1051; sequence PGEGHFWQVDHIKPVYGGGGQCSLDNLQTLCTVCHKERTAR. Residues 1011–1079 are endonuclease activity; it reads PGEGHFWQVD…SDITRFLVKK (69 aa). Residues 1074–1078 carry the APIM motif motif; sequence RFLVK.

Belongs to the SNF2/RAD54 helicase family. As to quaternary structure, interacts (via PIP-box and RanBP2-type zinc finger) with PCNA (when PCNA is polyubiquitinated via 'Lys-63'-linked polyubiquitin). In terms of processing, (Microbial infection) Methylation at Cys-630 by enteropathogenic E.coli protein NleE or S.flexneri protein OspZ: methylation disrupts ability to bind 'Lys-63'-linked ubiquitin.

It is found in the nucleus. Its subcellular location is the chromosome. Functionally, DNA annealing helicase and endonuclease required to maintain genome stability at stalled or collapsed replication forks by facilitating fork restart and limiting inappropriate recombination that could occur during template switching events. Recruited to the sites of stalled DNA replication by polyubiquitinated PCNA and acts as a structure-specific endonuclease that cleaves the replication fork D-loop intermediate, generating an accessible 3'-OH group in the template of the leading strand, which is amenable to extension by DNA polymerase. In addition to endonuclease activity, also catalyzes the fork regression via annealing helicase activity in order to prevent disintegration of the replication fork and the formation of double-strand breaks. The chain is DNA annealing helicase and endonuclease ZRANB3 from Homo sapiens (Human).